The chain runs to 1780 residues: Callose synthase 12 (1780 aa).

Over 1–302 (MSLRHRTVPP…ERRTFFYLYR (302 aa)) the chain is Cytoplasmic. The chain crosses the membrane as a helical span at residues 303–323 (SFDRLWVMLALFLQAAIIVAW). At 324 to 348 (EEKPDTSSVTRQLWNALKARDVQVR) the chain is on the extracellular side. The helical transmembrane segment at 349-369 (LLTVFLTWSGMRLLQAVLDAA) threads the bilayer. Topologically, residues 370–386 (SQYPLVSRETKRHFFRM) are cytoplasmic. The helical transmembrane segment at 387–407 (LMKVIAAAVWIVAFTVLYTNI) threads the bilayer. Topologically, residues 408–427 (WKQKRQDRQWSNAATTKIYQ) are extracellular. The chain crosses the membrane as a helical span at residues 428-448 (FLYAVGAFLVPEILALALFII). Over 449–489 (PWMRNFLEETNWKIFFALTWWFQGKSFVGRGLREGLVDNIK) the chain is Cytoplasmic. Residues 490 to 510 (YSTFWIFVLATKFTFSYFLQV) traverse the membrane as a helical segment. Residues 511-542 (KPMIKPSKLLWNLKDVDYEWHQFYGDSNRFSV) are Extracellular-facing. Residues 543–563 (ALLWLPVVLIYLMDIQIWYAI) traverse the membrane as a helical segment. Residues 564–1348 (YSSIVGAVVG…FFRMLSFFYT (785 aa)) are Cytoplasmic-facing. The helical transmembrane segment at 1349–1369 (TVGFFFNTMMVILTVYAFLWG) threads the bilayer. The Extracellular segment spans residues 1370–1394 (RVYLALSGVEKSALADSTDTNAALG). Residues 1395–1415 (VILNQQFIIQLGLFTALPMIV) form a helical membrane-spanning segment. Over 1416 to 1421 (EWSLEE) the chain is Cytoplasmic. The chain crosses the membrane as a helical span at residues 1422 to 1442 (GFLLAIWNFIRMQIQLSAVFY). The Extracellular segment spans residues 1443–1489 (TFSMGTRAHYFGRTILHGGAKYRATGRGFVVEHKGFTENYRLYARSH). Residues 1490–1510 (FVKAIELGLILIVYASHSPIA) form a helical membrane-spanning segment. Topologically, residues 1511–1516 (KDSLIY) are cytoplasmic. Residues 1517–1537 (IAMTITSWFLVISWIMAPFVF) form a helical membrane-spanning segment. The Extracellular segment spans residues 1538–1588 (NPSGFDWLKTVYDFEDFMNWIWYQGRISTKSEQSWEKWWYEEQDHLRNTGK). Residues 1589-1609 (AGLFVEIILVLRFFFFQYGIV) traverse the membrane as a helical segment. Topologically, residues 1610-1620 (YQLKIANGSTS) are cytoplasmic. The chain crosses the membrane as a helical span at residues 1621–1641 (LFVYLFSWIYIFAIFVLFLVI). Residues 1642–1657 (QYARDKYSAKAHIRYR) lie on the Extracellular side of the membrane. A helical transmembrane segment spans residues 1658-1678 (LVQFLLIVLAILVIVALLEFT). Residues 1679–1681 (HFS) lie on the Cytoplasmic side of the membrane. Residues 1682–1702 (FIDIFTSLLAFIPTGWGILLI) form a helical membrane-spanning segment. Over 1703–1728 (AQTQRKWLKNYTIFWNAVVSVARMYD) the chain is Extracellular. N1712 carries N-linked (GlcNAc...) asparagine glycosylation. A helical membrane pass occupies residues 1729-1749 (ILFGILIMVPVAFLSWMPGFQ). Topologically, residues 1750–1780 (SMQTRILFNEAFSRGLRIMQIVTGKKSKGDV) are cytoplasmic.

This sequence belongs to the glycosyltransferase 48 family. Highly expressed in flowers. Expressed at low levels in roots, leaves, stems, cauline leaves and siliques.

It is found in the cell membrane. It catalyses the reaction [(1-&gt;3)-beta-D-glucosyl](n) + UDP-alpha-D-glucose = [(1-&gt;3)-beta-D-glucosyl](n+1) + UDP + H(+). Its function is as follows. Involved in sporophytic and gametophytic development. Required for normal leaf development. During pollen formation, required for the formation of the callose wall separating the tetraspores of the tetrad (interstitial wall), but not for the callose wall surrounding the pollen mother cells (peripheral wall). Functionally redudant to CALS11 (GSL1). May play a role later in pollen grain maturation. Required for callose formation induced by wounding and pathogen attack. May interfere with salicylic acid-induced signaling pathway during defense response. During plant growth and development, callose is found as a transitory component of the cell plate in dividing cells, is a major component of pollen mother cell walls and pollen tubes, and is found as a structural component of plasmodesmatal canals. The polypeptide is Callose synthase 12 (CALS12) (Arabidopsis thaliana (Mouse-ear cress)).